The primary structure comprises 291 residues: Acetyl-coenzyme A carboxylase carboxyl transferase subunit beta (291 aa).

Residues 34–291 enclose the CoA carboxyltransferase N-terminal domain; it reads MWTKCSNCNS…LILHGVNKYE (258 aa). Zn(2+) is bound by residues Cys-38, Cys-41, Cys-57, and Cys-60. A C4-type zinc finger spans residues 38–60; that stretch reads CSNCNSMIYYEDLENNKYVCTKC.

It belongs to the AccD/PCCB family. As to quaternary structure, acetyl-CoA carboxylase is a heterohexamer composed of biotin carboxyl carrier protein (AccB), biotin carboxylase (AccC) and two subunits each of ACCase subunit alpha (AccA) and ACCase subunit beta (AccD). Zn(2+) is required as a cofactor.

The protein localises to the cytoplasm. It carries out the reaction N(6)-carboxybiotinyl-L-lysyl-[protein] + acetyl-CoA = N(6)-biotinyl-L-lysyl-[protein] + malonyl-CoA. Its pathway is lipid metabolism; malonyl-CoA biosynthesis; malonyl-CoA from acetyl-CoA: step 1/1. Component of the acetyl coenzyme A carboxylase (ACC) complex. Biotin carboxylase (BC) catalyzes the carboxylation of biotin on its carrier protein (BCCP) and then the CO(2) group is transferred by the transcarboxylase to acetyl-CoA to form malonyl-CoA. This is Acetyl-coenzyme A carboxylase carboxyl transferase subunit beta from Clostridium botulinum (strain Alaska E43 / Type E3).